The sequence spans 136 residues: Large ribosomal subunit protein uL16c (136 aa).

Basic residues predominate over residues 1 to 17 (MLSPKRVKFRKQHRGRM). The interval 1–25 (MLSPKRVKFRKQHRGRMKGISTRGN) is disordered.

It belongs to the universal ribosomal protein uL16 family. As to quaternary structure, part of the 50S ribosomal subunit.

It is found in the plastid. Its subcellular location is the chloroplast. The chain is Large ribosomal subunit protein uL16c from Anthoceros angustus (Hornwort).